The sequence spans 456 residues: Enolase (456 aa).

Gln177 contributes to the (2R)-2-phosphoglycerate binding site. Glu219 acts as the Proton donor in catalysis. The Mg(2+) site is built by Asp256, Glu310, and Asp337. Lys362, Arg391, Ser392, and Lys413 together coordinate (2R)-2-phosphoglycerate. The Proton acceptor role is filled by Lys362.

It belongs to the enolase family. Homodimer. It depends on Mg(2+) as a cofactor.

The protein resides in the cytoplasm. Its subcellular location is the secreted. It localises to the cell surface. The catalysed reaction is (2R)-2-phosphoglycerate = phosphoenolpyruvate + H2O. It participates in carbohydrate degradation; glycolysis; pyruvate from D-glyceraldehyde 3-phosphate: step 4/5. Its function is as follows. Catalyzes the reversible conversion of 2-phosphoglycerate (2-PG) into phosphoenolpyruvate (PEP). It is essential for the degradation of carbohydrates via glycolysis. In terms of biological role, 'Moonlights' as a plasminogen receptor. Binds plasminogen, but no fibronectin binding was observed. Plasminogen binding increases bacterial adherence to host cells; plasmin activity leads to degradation of host extracellular matrix proteins, facilitating bacterial dissemination and disease spread. This is Enolase from Mycoplasma pneumoniae (strain ATCC 29342 / M129 / Subtype 1) (Mycoplasmoides pneumoniae).